The following is a 549-amino-acid chain: Putative acyl-CoA synthetase YngI (549 aa).

Residues 198–206 (TSGTTGFPK), Asp423, Arg438, and Lys529 each bind ATP.

Belongs to the ATP-dependent AMP-binding enzyme family.

This is Putative acyl-CoA synthetase YngI (yngI) from Bacillus subtilis (strain 168).